The primary structure comprises 132 residues: Interleukin-13 (132 aa).

The first 18 residues, 1 to 18 (MALLLTAVIVLICFGGLT), serve as a signal peptide directing secretion. 4 N-linked (GlcNAc...) asparagine glycosylation sites follow: Asn38, Asn49, Asn57, and Asn75. 2 cysteine pairs are disulfide-bonded: Cys48–Cys76 and Cys64–Cys90.

Belongs to the IL-4/IL-13 family. Interacts with IL13RA2.

It localises to the secreted. In terms of biological role, cytokine that plays important roles in allergic inflammation and immune response to parasite infection. Synergizes with IL2 in regulating interferon-gamma synthesis. Stimulates B-cell proliferation, and activation of eosinophils, basophils, and mast cells. Plays an important role in controlling IL33 activity by modulating the production of transmembrane and soluble forms of interleukin-1 receptor-like 1/IL1RL1. Displays the capacity to antagonize Th1-driven proinflammatory immune response and downregulates synthesis of many proinflammatory cytokines including IL1, IL6, IL10, IL12 and TNF-alpha through a mechanism that partially involves suppression of NF-kappa-B. Also functions on nonhematopoietic cells, including endothelial cells where it induces vascular cell adhesion protein 1/VCAM1, which is important in the recruitment of eosinophils. Exerts its biological effects through its receptors which comprises the IL4R chain and the IL13RA1 chain, to activate JAK1 and TYK2, leading to the activation of STAT6. Aside from IL13RA1, another receptor IL13RA2 acts as a high affinity decoy for IL13 and mediates internalization and depletion of extracellular IL13. The chain is Interleukin-13 (IL13) from Bos taurus (Bovine).